Consider the following 1828-residue polypeptide: Chromodomain-helicase-DNA-binding protein 2 (1828 aa).

Over residues 1 to 14 (MMRNKDKSQEEDSS) the composition is skewed to basic and acidic residues. A disordered region spans residues 1–243 (MMRNKDKSQE…EDDDFETDSD (243 aa)). Low complexity predominate over residues 15-75 (LHSNASSHSA…SESESAGSKS (61 aa)). 3 stretches are compositionally biased toward basic and acidic residues: residues 81-101 (EAKEKPASKKERIADVKKMWE), 115-128 (SRQEPSRFNIKEEA), and 146-155 (KKQEKWKQEP). Positions 175-204 (VKARRPVPRRTVPKPRVKKQPKTQRGKRKK) are enriched in basic residues. Residues Ser207 and Ser208 each carry the phosphoserine modification. A compositionally biased stretch (acidic residues) spans 234-243 (EDDDFETDSD). Phosphothreonine is present on Thr240. Ser242 bears the Phosphoserine mark. 2 consecutive Chromo domains span residues 261–353 (ETIE…QWLG) and 378–456 (QIVE…IPTR). The Helicase ATP-binding domain occupies 496-666 (AHSWCKNNSV…WSLLHFIMPE (171 aa)). Position 509-516 (509-516 (DEMGLGKT)) interacts with ATP. A DEAH box motif is present at residues 617-620 (DEAH). Positions 795-946 (LLDKLLTRLR…HLVIQRMDTT (152 aa)) constitute a Helicase C-terminal domain. Disordered stretches follow at residues 1030–1124 (EDEE…RSVR), 1331–1462 (VTGG…DEDD), 1556–1638 (HKKR…ADRG), and 1680–1828 (HMDA…VRKT). Basic and acidic residues predominate over residues 1037 to 1065 (ERPHKDWDEIIPEEQRKKVEEEERQKELE). Residues Ser1085, Ser1087, Ser1365, and Ser1386 each carry the phosphoserine modification. The span at 1347–1371 (KKENKVPRLKEEHGIELSSPRHSDN) shows a compositional bias: basic and acidic residues. Composition is skewed to basic and acidic residues over residues 1396 to 1431 (ENKENKEKQMSSRKDKEGDKERKKSKDKKEKPKSGD) and 1565 to 1574 (EQKKKDDVTG). A CHD1 helical C-terminal domain (CHCT) region spans residues 1464 to 1566 (LDQETFSICK…KKRSQEEEEQ (103 aa)). Residues 1584 to 1601 (SGSSRDSLISQSHTSHNL) show a composition bias toward polar residues. Composition is skewed to basic and acidic residues over residues 1698–1720 (RPYDQYSSDRDHRGHRDYYDRHH), 1739–1749 (QDFRRMSDHRP), 1760–1772 (DHYRSFHTDKLGE), and 1795–1814 (SPHDSKSPLDHRSPLERSLE). Ser1807 is subject to Phosphoserine.

Belongs to the SNF2/RAD54 helicase family. In terms of assembly, interacts with MYOD1. Interacts with histone H3.3.

It is found in the nucleus. The catalysed reaction is ATP + H2O = ADP + phosphate + H(+). In terms of biological role, ATP-dependent chromatin-remodeling factor that specifically binds to the promoter of target genes, leading to chromatin remodeling, possibly by promoting deposition of histone H3.3. Involved in myogenesis via interaction with MYOD1: binds to myogenic gene regulatory sequences and mediates incorporation of histone H3.3 prior to the onset of myogenic gene expression, promoting their expression. This chain is Chromodomain-helicase-DNA-binding protein 2 (CHD2), found in Homo sapiens (Human).